We begin with the raw amino-acid sequence, 346 residues long: Biotin synthase (346 aa).

The Radical SAM core domain maps to 36-265 (YFGRQVMLHR…KAEIRIGGGR (230 aa)). [4Fe-4S] cluster is bound by residues Cys-54, Cys-58, and Cys-61. The [2Fe-2S] cluster site is built by Cys-98, Cys-130, Cys-190, and Arg-260.

The protein belongs to the radical SAM superfamily. Biotin synthase family. In terms of assembly, homodimer. It depends on [4Fe-4S] cluster as a cofactor. [2Fe-2S] cluster serves as cofactor.

The catalysed reaction is (4R,5S)-dethiobiotin + (sulfur carrier)-SH + 2 reduced [2Fe-2S]-[ferredoxin] + 2 S-adenosyl-L-methionine = (sulfur carrier)-H + biotin + 2 5'-deoxyadenosine + 2 L-methionine + 2 oxidized [2Fe-2S]-[ferredoxin]. It participates in cofactor biosynthesis; biotin biosynthesis; biotin from 7,8-diaminononanoate: step 2/2. Its function is as follows. Catalyzes the conversion of dethiobiotin (DTB) to biotin by the insertion of a sulfur atom into dethiobiotin via a radical-based mechanism. This Acaryochloris marina (strain MBIC 11017) protein is Biotin synthase.